The sequence spans 207 residues: Protein dct-5 (207 aa).

The helical transmembrane segment at Leu13–Phe33 threads the bilayer.

It is found in the membrane. Acts downstream of daf-16/foxo to suppress tumors induced by disruption of gld-1. Potentially a direct target of daf-15/foxo. The protein is Protein dct-5 (dct-5) of Caenorhabditis elegans.